Reading from the N-terminus, the 192-residue chain is T-cell surface glycoprotein CD3 epsilon chain (192 aa).

The first 21 residues, 1 to 21, serve as a signal peptide directing secretion; that stretch reads MQSGNLWRALGLCLLLVGAWA. Over 23–114 the chain is Extracellular; it reads DADEQKPYEV…QNCMEVNLME (92 aa). One can recognise an Ig-like domain in the interval 26-97; that stretch reads EQKPYEVSIS…EGNKEAAHTL (72 aa). A disulfide bond links cysteine 43 and cysteine 84. Asparagine 72 carries N-linked (GlcNAc...) asparagine glycosylation. Residues 115 to 135 form a helical membrane-spanning segment; it reads VATIIVVDICVTLGLLLLVYY. Over 136–192 the chain is Cytoplasmic; that stretch reads WSKSRKAKASPMTRGAGAGGRPRGQNKGRPPPVPNPDYEPIRKGQRDLYAGLNQRGV. Residues 145–180 form a disordered region; the sequence is SPMTRGAGAGGRPRGQNKGRPPPVPNPDYEPIRKGQ. The segment at 160-177 is NUMB-binding region; sequence QNKGRPPPVPNPDYEPIR. In terms of domain architecture, ITAM spans 163-190; that stretch reads GRPPPVPNPDYEPIRKGQRDLYAGLNQR. Residues 164-171 form a proline-rich sequence region; sequence RPPPVPNP. Phosphotyrosine occurs at positions 173 and 184.

The TCR-CD3 complex is composed of a CD3D/CD3E and a CD3G/CD3E heterodimers that preferentially associate with TCRalpha and TCRbeta, respectively, to form TCRalpha/CD3E/CD3G and TCRbeta/CD3G/CD3E trimers. In turn, the hexamer interacts with CD3Z homodimer to form the TCR-CD3 complex. Alternatively, TCRalpha and TCRbeta can be replaced by TCRgamma and TCRdelta. Interacts with CD6. Interacts (via Proline-rich sequence) with NCK1; the interaction is ligand dependent but independent of tyrosine kinase activation. Phosphorylated on Tyr residues after T-cell receptor triggering by LCK in association with CD4/CD8.

It localises to the cell membrane. In terms of biological role, part of the TCR-CD3 complex present on T-lymphocyte cell surface that plays an essential role in adaptive immune response. When antigen presenting cells (APCs) activate T-cell receptor (TCR), TCR-mediated signals are transmitted across the cell membrane by the CD3 chains CD3D, CD3E, CD3G and CD3Z. All CD3 chains contain immunoreceptor tyrosine-based activation motifs (ITAMs) in their cytoplasmic domain. Upon TCR engagement, these motifs become phosphorylated by Src family protein tyrosine kinases LCK and FYN, resulting in the activation of downstream signaling pathways. In addition of this role of signal transduction in T-cell activation, CD3E plays an essential role in correct T-cell development. Also participates in internalization and cell surface down-regulation of TCR-CD3 complexes via endocytosis sequences present in CD3E cytosolic region. In addition to its role as a TCR coreceptor, it serves as a receptor for ITPRIPL1. Ligand recognition inhibits T-cell activation by promoting interaction with NCK1, which prevents CD3E-ZAP70 interaction and blocks the ERK-NFkB signaling cascade and calcium influx. The polypeptide is T-cell surface glycoprotein CD3 epsilon chain (CD3E) (Bos taurus (Bovine)).